The sequence spans 628 residues: Eukaryotic peptide chain release factor GTP-binding subunit ERF3B (628 aa).

A compositionally biased stretch (low complexity) spans 1-10 (MDSGSSSSDS). Disordered stretches follow at residues 1–44 (MDSG…REPL), 71–124 (SFLR…LEGS), and 146–191 (LEES…KSKS). Residues 201 to 425 (KEHVNVVFIG…YLDNLPNFNR (225 aa)) form the tr-type G domain. A G1 region spans residues 210–217 (GHVDAGKS). 213–218 (DAGKST) provides a ligand contact to GTP. A G2 region spans residues 266 to 270 (GKTVE). A G3 region spans residues 287-290 (DAPG). GTP contacts are provided by residues 349-352 (NKMD) and 391-393 (SGL). The tract at residues 349–352 (NKMD) is G4. The tract at residues 391 to 393 (SGL) is G5.

Belongs to the TRAFAC class translation factor GTPase superfamily. Classic translation factor GTPase family. ERF3 subfamily. Component of the eRF1-eRF3-GTP ternary complex, composed of ETF1/ERF1 and ERF3 (GSPT1/ERF3A or GSPT2/ERF3B) and GTP. Component of the transient SURF (SMG1-UPF1-eRF1-eRF3) complex. Interacts with UPF1 and PABPC1.

The protein resides in the cytoplasm. The catalysed reaction is GTP + H2O = GDP + phosphate + H(+). GTPase component of the eRF1-eRF3-GTP ternary complex, a ternary complex that mediates translation termination in response to the termination codons UAA, UAG and UGA. GSPT2/ERF3B mediates ETF1/ERF1 delivery to stop codons: The eRF1-eRF3-GTP complex binds to a stop codon in the ribosomal A-site. GTP hydrolysis by GSPT2/ERF3B induces a conformational change that leads to its dissociation, permitting ETF1/ERF1 to accommodate fully in the A-site. Component of the transient SURF complex which recruits UPF1 to stalled ribosomes in the context of nonsense-mediated decay (NMD) of mRNAs containing premature stop codons. The sequence is that of Eukaryotic peptide chain release factor GTP-binding subunit ERF3B (GSPT2) from Pongo abelii (Sumatran orangutan).